A 438-amino-acid chain; its full sequence is uncharacterized protein (438 aa).

The first 19 residues, 1-19 (MKKLLLAASIICLASAGLA), serve as a signal peptide directing secretion.

This is an uncharacterized protein from Rickettsia conorii (strain ATCC VR-613 / Malish 7).